The primary structure comprises 224 residues: dTTP/UTP pyrophosphatase (224 aa).

The Proton acceptor role is filled by Asp77.

Belongs to the Maf family. YhdE subfamily. Requires a divalent metal cation as cofactor.

The protein resides in the cytoplasm. The enzyme catalyses dTTP + H2O = dTMP + diphosphate + H(+). It catalyses the reaction UTP + H2O = UMP + diphosphate + H(+). Its function is as follows. Nucleoside triphosphate pyrophosphatase that hydrolyzes dTTP and UTP. May have a dual role in cell division arrest and in preventing the incorporation of modified nucleotides into cellular nucleic acids. This Dehalococcoides mccartyi (strain ATCC BAA-2100 / JCM 16839 / KCTC 5957 / BAV1) protein is dTTP/UTP pyrophosphatase.